Here is a 305-residue protein sequence, read N- to C-terminus: MVLYPPDDPFLISFTLFGLPIVVRWYGAIIMTGALIAALLASRRAVARGYHPDHVWNQLMLGLVLGIAGARIYYVAFEWERFAPNPWSVFNLTTGGIAIHGAIIGALLSTVIYTRYAGLPYWDWLDVCVPGFLLAQSIGRWGNFFNQEAYGRPTDLPFGLRIDPEYRVPPYNDLTTYPITTLFHPTFLYESVWNLVGVGILLWLDRRFGRLAPPERRRLNPGDLLFLYGIIYSSGRFWIEGLRIDSLCANGVGGSCEGSIRVAQLVSMVAIVVCGVLIFLNHRRPFAGTPTVRPDGDASPVSEAR.

The next 3 membrane-spanning stretches (helical) occupy residues 10 to 30 (FLIS…GAII), 59 to 79 (LMLG…AFEW), and 92 to 112 (LTTG…STVI). Arg-140 provides a ligand contact to a 1,2-diacyl-sn-glycero-3-phospho-(1'-sn-glycerol). 2 helical membrane-spanning segments follow: residues 182–202 (LFHP…GILL) and 260–280 (IRVA…LIFL).

This sequence belongs to the Lgt family.

It is found in the cell membrane. It catalyses the reaction L-cysteinyl-[prolipoprotein] + a 1,2-diacyl-sn-glycero-3-phospho-(1'-sn-glycerol) = an S-1,2-diacyl-sn-glyceryl-L-cysteinyl-[prolipoprotein] + sn-glycerol 1-phosphate + H(+). It participates in protein modification; lipoprotein biosynthesis (diacylglyceryl transfer). Catalyzes the transfer of the diacylglyceryl group from phosphatidylglycerol to the sulfhydryl group of the N-terminal cysteine of a prolipoprotein, the first step in the formation of mature lipoproteins. In Chloroflexus aggregans (strain MD-66 / DSM 9485), this protein is Phosphatidylglycerol--prolipoprotein diacylglyceryl transferase.